The sequence spans 902 residues: Cytosolic 10-formyltetrahydrofolate dehydrogenase (902 aa).

Residues 1-310 form a hydrolase domain region; that stretch reads MKIAVIGQSL…PASQFFKGSA (310 aa). Residue Ser-9 is modified to Phosphoserine. At Lys-38 the chain carries N6-succinyllysine. Position 88–90 (88–90) interacts with (6R)-10-formyltetrahydrofolate; sequence QFI. The active-site Proton donor is the His-106. A (6R)-10-formyltetrahydrofolate-binding site is contributed by Asp-142. The 78-residue stretch at 318–395 folds into the Carrier domain; sequence EEELATAEAV…DFIQLLVRKL (78 aa). Ser-354 bears the O-(pantetheine 4'-phosphoryl)serine mark. The aldehyde dehydrogenase domain stretch occupies residues 417–902; that stretch reads TLQMPYQLFI…LRIKTVTFEY (486 aa). NADP(+) contacts are provided by residues 571–573 and 597–600; these read IPW and KPAQ. Phosphoserine occurs at positions 629 and 631. NADP(+) is bound by residues 630–635 and 650–651; these read GSLVGQ and GS. Lys-660 carries the post-translational modification N6-succinyllysine. The active-site Proton acceptor is the Glu-673. 673 to 674 contacts NADP(+); that stretch reads EL. Cys-707 (proton donor) is an active-site residue. Lys-757 is an NADP(+) binding site. Position 767 is an N6-succinyllysine (Lys-767). Position 804-806 (804-806) interacts with NADP(+); sequence ESF. The residue at position 825 (Ser-825) is a Phosphoserine. Residue Lys-882 is modified to N6-acetyllysine.

The protein in the N-terminal section; belongs to the GART family. It in the C-terminal section; belongs to the aldehyde dehydrogenase family. ALDH1L subfamily. In terms of assembly, homotetramer. In terms of processing, phosphopantetheinylation at Ser-354 by AASDHPPT is required for the formyltetrahydrofolate dehydrogenase activity. In terms of tissue distribution, highly expressed in liver (at protein level). Also expressed in pancreas, brain and lung (at protein level).

Its subcellular location is the cytoplasm. It is found in the cytosol. The enzyme catalyses (6R)-10-formyltetrahydrofolate + NADP(+) + H2O = (6S)-5,6,7,8-tetrahydrofolate + CO2 + NADPH + H(+). Functionally, cytosolic 10-formyltetrahydrofolate dehydrogenase that catalyzes the NADP(+)-dependent conversion of 10-formyltetrahydrofolate to tetrahydrofolate and carbon dioxide. May also have an NADP(+)-dependent aldehyde dehydrogenase activity towards formaldehyde, acetaldehyde, propionaldehyde, and benzaldehyde. The sequence is that of Cytosolic 10-formyltetrahydrofolate dehydrogenase from Mus musculus (Mouse).